The primary structure comprises 334 residues: Ornithine carbamoyltransferase (334 aa).

Carbamoyl phosphate-binding positions include 56 to 59, glutamine 83, arginine 107, and 134 to 137; these read STRT and HPTQ. Residues asparagine 168, aspartate 232, and 236–237 contribute to the L-ornithine site; that span reads SM. Carbamoyl phosphate is bound by residues 274–275 and arginine 320; that span reads CL.

The protein belongs to the aspartate/ornithine carbamoyltransferase superfamily. OTCase family.

Its subcellular location is the cytoplasm. The catalysed reaction is carbamoyl phosphate + L-ornithine = L-citrulline + phosphate + H(+). Its pathway is amino-acid biosynthesis; L-arginine biosynthesis; L-arginine from L-ornithine and carbamoyl phosphate: step 1/3. Its function is as follows. Reversibly catalyzes the transfer of the carbamoyl group from carbamoyl phosphate (CP) to the N(epsilon) atom of ornithine (ORN) to produce L-citrulline. The sequence is that of Ornithine carbamoyltransferase from Escherichia coli O45:K1 (strain S88 / ExPEC).